A 518-amino-acid polypeptide reads, in one-letter code: 3-phosphoshikimate 1-carboxyvinyltransferase 1, chloroplastic (518 aa).

A chloroplast-targeting transit peptide spans 1–74 (MAQISSMGQG…RISASVVTAQ (74 aa)). 3-phosphoshikimate is bound by residues lysine 97, serine 98, and arginine 102. Phosphoenolpyruvate is bound at residue lysine 97. Phosphoenolpyruvate contacts are provided by glycine 175 and arginine 205. 3-phosphoshikimate-binding residues include serine 252, serine 253, glutamine 254, serine 280, aspartate 405, and lysine 432. Glutamine 254 is a phosphoenolpyruvate binding site. The active-site Proton acceptor is the aspartate 405. Positions 436, 478, and 503 each coordinate phosphoenolpyruvate.

The protein belongs to the EPSP synthase family.

The protein resides in the plastid. Its subcellular location is the chloroplast. The enzyme catalyses 3-phosphoshikimate + phosphoenolpyruvate = 5-O-(1-carboxyvinyl)-3-phosphoshikimate + phosphate. The protein operates within metabolic intermediate biosynthesis; chorismate biosynthesis; chorismate from D-erythrose 4-phosphate and phosphoenolpyruvate: step 6/7. Functionally, catalyzes the transfer of the enolpyruvyl moiety of phosphoenolpyruvate (PEP) to the 5-hydroxyl of shikimate-3-phosphate (S3P) to produce enolpyruvyl shikimate-3-phosphate and inorganic phosphate. This Nicotiana tabacum (Common tobacco) protein is 3-phosphoshikimate 1-carboxyvinyltransferase 1, chloroplastic (EPSPS-1).